Here is a 1843-residue protein sequence, read N- to C-terminus: Xin actin-binding repeat-containing protein 1 (1843 aa).

Residues 1-10 (MADTQTQVAP) are compositionally biased toward polar residues. The segment at 1-48 (MADTQTQVAPTPTMRMATAEDLPLPPPPALEDLPLPPPKESFSKFHQQ) is disordered. The segment at 1 to 54 (MADTQTQVAPTPTMRMATAEDLPLPPPPALEDLPLPPPKESFSKFHQQRQASEL) is interaction with VASP. The segment covering 23–39 (PLPPPPALEDLPLPPPK) has biased composition (pro residues). 4 Xin repeats span residues 89 to 104 (GDVQCMRWIFENWRLD), 121 to 136 (GDVQATSRKFEEGSFA), 151 to 166 (GDVRAARWLFETKPLD), and 186 to 201 (GDVQGTRMLFETRPLD). The interval 132 to 151 (EGSFANSTDQEPTRPQPGGG) is disordered. Phosphoserine is present on residues S205, S208, and S213. 2 Xin repeats span residues 226–241 (GDVKKTVKLFQTEPLC) and 264–279 (NAVRSARWLFETRPLD). S295 carries the post-translational modification Phosphoserine. A Xin 7 repeat occupies 302–317 (PDVSATRWIFETQPLD). S332 is subject to Phosphoserine. Xin repeat units follow at residues 340 to 355 (PDVQQQQHLFETRALD) and 376 to 391 (GDVRSTLWLFETKPLD). The disordered stretch occupies residues 406-432 (DPQDGEGHLSSDSSSALPFSQSAPQRD). Low complexity predominate over residues 415–429 (SSDSSSALPFSQSAP). The Xin 10 repeat unit spans residues 436–451 (GDVKTFKNLFETLPLD). Residues 455–479 (QGEVLAHGSPSREEGTDSAGQAQGI) form a disordered region. Xin repeat units lie at residues 507–522 (GDVQGYRWMFETQPLD) and 545–560 (GDVGTARWLFETQPLE). An interaction with CTNNB1 region spans residues 531 to 632 (IDVVRGITRQ…AQSCTWMFKP (102 aa)). Residues 564–577 (QREQQERQKEEGKS) are compositionally biased toward basic and acidic residues. Positions 564–591 (QREQQERQKEEGKSQGDPQPEAPPKGDV) are disordered. Xin repeat units lie at residues 589 to 604 (GDVQTIRWLFETCPMS), 621 to 636 (AEAQSCTWMFKPQPVD), 654 to 669 (GERQTDRHVFETEPLQ), 691 to 706 (GQVSRQKEVFQALEAG), and 723 to 738 (GSVHKFTWLFENCPMG). Disordered regions lie at residues 943 to 999 (SLRW…QAIG), 1063 to 1205 (AEAQ…MAWG), 1238 to 1277 (SGPQAAGASPHPHNAFVPPPPTLPAAVTGPDFPAGAHRAE), 1289 to 1471 (DPLL…QKEL), and 1561 to 1696 (MSSL…DVSV). Polar residues-rich tracts occupy residues 1064-1073 (EAQSLHQQVL) and 1080-1089 (PTPTATSNPI). A compositionally biased stretch (polar residues) spans 1294–1311 (SHSSPAGQRTPGGSQTKT). A compositionally biased stretch (basic and acidic residues) spans 1357–1368 (GQREHQRGERDT). The span at 1393 to 1424 (GHSQPSLQHGLSTTAPRPTKNQATGSNAQSSE) shows a compositional bias: polar residues. The stretch at 1462–1490 (DSLQRNQKELQGLLNQVQALEKEAASSVD) forms a coiled coil. Polar residues-rich tracts occupy residues 1588–1600 (VTVSSSARPSGSG) and 1663–1679 (SRDSPSSPTFISIQSAT). Positions 1685-1843 (TPSFKGNPDV…SCSYSQPAAQ (159 aa)) are interaction with FLNC.

The protein belongs to the Xin family. As to quaternary structure, interacts (via N-terminus) with CTTN; the interaction promotes CTTN localization to intercalated disks in cardiomyocytes. Interacts with CTNNB1. Interacts with FLNC and VASP. Interacts with F-actin. In terms of tissue distribution, expressed in skeletal muscle at areas of Z-disk disruption in a longitudinal pattern spanning one or more sarcomeres (at protein level). As to expression, expressed in the heart (at protein level). Expressed in the heart.

It is found in the cell junction. Its subcellular location is the adherens junction. The protein resides in the desmosome. Functionally, protects actin filaments from depolymerization. Required for correct cardiac intercalated disk ultrastructure via maintenance of cell-cell adhesion stability, and as a result maintains cardiac organ morphology, conductance and heart beat rhythm. Required for development of normal skeletal muscle morphology and muscle fiber type composition. Plays a role in regulating muscle satellite cell activation and survival, as a result promotes muscle fiber recovery from injury and fatigue. In Homo sapiens (Human), this protein is Xin actin-binding repeat-containing protein 1.